Consider the following 420-residue polypeptide: Serine hydroxymethyltransferase (420 aa).

(6S)-5,6,7,8-tetrahydrofolate contacts are provided by residues Leu-121 and 125–127; that span reads GHL. The residue at position 230 (Lys-230) is an N6-(pyridoxal phosphate)lysine. (6S)-5,6,7,8-tetrahydrofolate is bound by residues Glu-246 and 354–356; that span reads SPF.

The protein belongs to the SHMT family. As to quaternary structure, homodimer. The cofactor is pyridoxal 5'-phosphate.

The protein resides in the cytoplasm. It carries out the reaction (6R)-5,10-methylene-5,6,7,8-tetrahydrofolate + glycine + H2O = (6S)-5,6,7,8-tetrahydrofolate + L-serine. The protein operates within one-carbon metabolism; tetrahydrofolate interconversion. It functions in the pathway amino-acid biosynthesis; glycine biosynthesis; glycine from L-serine: step 1/1. Its function is as follows. Catalyzes the reversible interconversion of serine and glycine with tetrahydrofolate (THF) serving as the one-carbon carrier. This reaction serves as the major source of one-carbon groups required for the biosynthesis of purines, thymidylate, methionine, and other important biomolecules. Also exhibits THF-independent aldolase activity toward beta-hydroxyamino acids, producing glycine and aldehydes, via a retro-aldol mechanism. This is Serine hydroxymethyltransferase from Rickettsia massiliae (strain Mtu5).